A 130-amino-acid chain; its full sequence is Fumarate reductase subunit C (130 aa).

Helical transmembrane passes span 34–54 (VPAV…KGGV), 60–80 (FVGF…LLAA), and 109–129 (IVKT…AVAL).

The protein belongs to the FrdC family. As to quaternary structure, part of an enzyme complex containing four subunits: a flavoprotein (FrdA), an iron-sulfur protein (FrdB), and two hydrophobic anchor proteins (FrdC and FrdD).

Its subcellular location is the cell inner membrane. In terms of biological role, two distinct, membrane-bound, FAD-containing enzymes are responsible for the catalysis of fumarate and succinate interconversion; fumarate reductase is used in anaerobic growth, and succinate dehydrogenase is used in aerobic growth. Anchors the catalytic components of the fumarate reductase complex to the cell inner membrane, binds quinones. In Serratia proteamaculans (strain 568), this protein is Fumarate reductase subunit C.